Consider the following 373-residue polypeptide: Chaperone protein DnaJ (373 aa).

The 66-residue stretch at 5–70 (DYYEVLGVNR…QKRAAYDQYG (66 aa)) folds into the J domain. The segment at 133 to 211 (GTETKIRIPV…CHGGGRVKQH (79 aa)) adopts a CR-type zinc-finger fold. Residues C146, C149, C163, C166, C185, C188, C199, and C202 each contribute to the Zn(2+) site. CXXCXGXG motif repeat units follow at residues 146–153 (CETCHGSG), 163–170 (CSTCGGHG), 185–192 (CPKCHGSG), and 199–206 (CPTCHGGG). Residues 346-373 (LEDINQQDSGKHSPREKSWMTKVKDFFQ) are disordered. Positions 354–373 (SGKHSPREKSWMTKVKDFFQ) are enriched in basic and acidic residues.

The protein belongs to the DnaJ family. Homodimer. The cofactor is Zn(2+).

The protein resides in the cytoplasm. In terms of biological role, participates actively in the response to hyperosmotic and heat shock by preventing the aggregation of stress-denatured proteins and by disaggregating proteins, also in an autonomous, DnaK-independent fashion. Unfolded proteins bind initially to DnaJ; upon interaction with the DnaJ-bound protein, DnaK hydrolyzes its bound ATP, resulting in the formation of a stable complex. GrpE releases ADP from DnaK; ATP binding to DnaK triggers the release of the substrate protein, thus completing the reaction cycle. Several rounds of ATP-dependent interactions between DnaJ, DnaK and GrpE are required for fully efficient folding. Also involved, together with DnaK and GrpE, in the DNA replication of plasmids through activation of initiation proteins. This is Chaperone protein DnaJ from Methylobacillus flagellatus (strain ATCC 51484 / DSM 6875 / VKM B-1610 / KT).